The primary structure comprises 83 residues: Putative cytochrome b5 B11H24.095 (83 aa).

The Cytochrome b5 heme-binding domain occupies 2-78; it reads SQTFTKSQVA…GTKLKVGTLA (77 aa). H37 and H60 together coordinate heme.

This sequence belongs to the cytochrome b5 family.

The chain is Putative cytochrome b5 B11H24.095 from Neurospora crassa (strain ATCC 24698 / 74-OR23-1A / CBS 708.71 / DSM 1257 / FGSC 987).